Here is a 400-residue protein sequence, read N- to C-terminus: TBC1 domain family member 13 (400 aa).

The 311-residue stretch at P35–D345 folds into the Rab-GAP TBC domain.

As to quaternary structure, interacts with RAB1A and RAB10; in a GTP-dependent manner.

It localises to the membrane. The protein localises to the cytoplasm. Its function is as follows. Acts as a GTPase-activating protein for RAB35. Together with RAB35 may be involved in regulation of insulin-induced glucose transporter SLC2A4/GLUT4 translocation to the plasma membrane in adipocytes. The chain is TBC1 domain family member 13 (TBC1D13) from Homo sapiens (Human).